A 62-amino-acid polypeptide reads, in one-letter code: MEMKNIFVALFISAVLVSSVSAATMESPAPSPGASSASTVAFPVVGSIVAASLSAFLALLLQ.

The first 22 residues, 1-22 (MEMKNIFVALFISAVLVSSVSA), serve as a signal peptide directing secretion. 3 positions are modified to 4-hydroxyproline: Pro28, Pro30, and Pro32. 3 O-linked (Ara...) hydroxyproline glycosylation sites follow: Pro28, Pro30, and Pro32. Ser35 carries GPI-anchor amidated serine lipidation. Residues 36-62 (SASTVAFPVVGSIVAASLSAFLALLLQ) constitute a propeptide, removed in mature form.

It belongs to the AG-peptide AGP family. In terms of processing, contains 4-hydroxyproline; hydroxylated on Pro-28, Pro-30 and Pro-32. Post-translationally, O-glycosylated on hydroxyprolines; noncontiguous hydroxylproline residues are glycosylated with arabinogalactan.

The protein resides in the cell membrane. Functionally, proteoglycan that seems to be implicated in diverse developmental roles such as differentiation, cell-cell recognition, embryogenesis and programmed cell death. This is Arabinogalactan protein 40 from Arabidopsis thaliana (Mouse-ear cress).